A 201-amino-acid polypeptide reads, in one-letter code: Histone chaperone asf1a-A (201 aa).

It belongs to the ASF1 family. In terms of assembly, interacts with histone H3 (including both histone H3.1 and H3.3) and histone H4. Interacts with hira and p60.

The protein localises to the nucleus. Histone chaperone that facilitates histone deposition and histone exchange and removal during nucleosome assembly and disassembly. Not critical for histone deposition during nucleosome assembly. The sequence is that of Histone chaperone asf1a-A (asf1aa) from Xenopus laevis (African clawed frog).